Consider the following 1351-residue polypeptide: Transcriptional regulator ovo (1351 aa).

A required for Ubr3 binding and tal-dependent proteolytic processing region spans residues 1–31 (MPKIFLIKNRLHQQQQRLLESQNLLQHKNQD). 10 disordered regions span residues 22–77 (QNLL…SDQQ), 100–119 (LDHL…NPNQ), 184–397 (NSPI…SDEE), 447–554 (AGHG…HFNA), 640–665 (SNSK…GQTS), 778–807 (DDEE…PVEQ), 834–887 (GSNQ…YQHA), 916–1000 (LLSQ…PSPT), 1023–1044 (PMSS…GSSN), and 1113–1192 (SKHG…DSSS). The segment covering 49-60 (SPTPTSQPPPEP) has biased composition (pro residues). Low complexity-rich tracts occupy residues 61-72 (QGQGQQVLGQVP) and 104-119 (NQNQ…NPNQ). A compositionally biased stretch (basic and acidic residues) spans 205–232 (EKEKPAEREREKSDERTEQVEKEERVER). Positions 233–242 (EEEEDDEVDV) are enriched in acidic residues. Positions 262–272 (QRKEYPQEPKD) are enriched in basic and acidic residues. Positions 324–340 (TPPPADQRPSPPPPRDP) are enriched in pro residues. A compositionally biased stretch (low complexity) spans 447–486 (AGHGRNSSSSSGAAGQGFQSSGFGSQNSGSGSSSGNQNAG). The segment covering 487–505 (SGAGSPGSGAGGGGGMGGG) has biased composition (gly residues). Over residues 530-552 (KSGQQSTASNNTGQSPGANHSHF) the composition is skewed to polar residues. A compositionally biased stretch (basic residues) spans 644 to 653 (FHNHHHHHQH). The segment covering 793–807 (STPSLTPDSVTPVEQ) has biased composition (polar residues). 5 stretches are compositionally biased toward low complexity: residues 835–878 (SNQQ…HVQQ), 916–962 (LLSQ…QQQQ), 970–979 (QQQQQPQPQS), 1025–1044 (SSSS…GSSN), and 1121–1175 (HQQQ…HGSA). 4 consecutive C2H2-type zinc fingers follow at residues 1197-1219 (FVCR…MKCH), 1225-1247 (YLCT…TRTH), 1253-1276 (YKCN…QKVH), and 1292-1315 (YVCE…KNNH).

In terms of assembly, interacts (via N-terminus) with Ubr3; the interaction is mediated by tal. Post-translationally, N-terminus is proteolytically cleaved and ubiquitinated via a tal-dependent mechanism, leading to the proteolytic degradation of the N-terminus and the production of transcriptional activator shavenbaby, a truncated form with transcriptional activator activity.

Its subcellular location is the cytoplasm. The protein localises to the nucleus. The protein resides in the nucleoplasm. Transcriptional regulator with essential functions in the germline and soma. Plays an essential role in regulating the formation of apical cell extensions such as denticles and aristae, and initiating cytoskeletal remodeling during epidermal differentiation. Its function is as follows. Transcriptional repressor which functions in postembryonic development. The full-length unprocessed form acts as a transcriptional repressor (Transcriptional repressor svb). Functionally, transcriptional activator which initiates trichome development and also promotes tarsal joint development. Has an essential somatic role regulating the tal-dependent formation of trichomes, and initiating cytoskeletal remodeling during epidermal differentiation. Function with SoxN is required for correct denticle morphogenesis on the embryonic epidermis. SoxN and svb appear to act both independently and in conjunction with each other to activate certain genes involved in denticle morphogenesis; Svb appears to be involved in regulating denticle length whereas SoxN regulates the denticle base circumference. Also functions in the development of other apical cell extensions such as bristles. Also has an important role in tarsal joint development, repressing expression of the N ligand Dl and defining its signaling boundary. In terms of biological role, transcriptional repressor which is specifically involved in female germline development, where it functions antagonistically to isoform D. Negatively regulates expression of otu and may also have autoregulatory activity. Negatively regulates expression of piwi in the primordial germ cells (PGCs). Transcriptional activator which is specifically involved in female germline development, where it functions antagonistically to isoform C. Necessary and sufficient for normal oogenesis. Required in the primordial germ cells (PGCs) for normal development of male and female germline cells. Plays a role in germline sex determination. Binds the promoter DNA and positively regulates the transcription of the otu gene in a stage-specific manner. May have autoregulatory activity. This is Transcriptional regulator ovo from Drosophila melanogaster (Fruit fly).